Here is a 295-residue protein sequence, read N- to C-terminus: MKVIIPVAGLGTRMLPATKAIPKEMLTIADKPLIQYIVNECVAAGIKEIVFVTHSSKNAIENHFDTSFELETMLEKRVKRQLLDEVRSIVPNDVTLMHVRQGQAKGLGHAVLCGKAVVGKEPFAVVLPDVILADFTANPKTENLAAMIKRFSETQCSQIMVAPVPQEDVSNYGIVDCATDNIRAGETAKIAKMVEKPSIENAPSNLAIVGRYVFSATIWDLLERTPVGVGDEIQLTDAIDMLIEKETVEAFHMTGRAFDCGDKLGYMEAFVEYSLRHEKCGQQFQKIIKELAKSL.

This sequence belongs to the UDPGP type 2 family.

It carries out the reaction alpha-D-glucose 1-phosphate + UTP + H(+) = UDP-alpha-D-glucose + diphosphate. In terms of biological role, may play a role in stationary phase survival. The chain is UTP--glucose-1-phosphate uridylyltransferase (galU) from Haemophilus ducreyi (strain 35000HP / ATCC 700724).